The sequence spans 316 residues: Adenine deaminase (316 aa).

Residues histidine 14, histidine 16, and histidine 194 each contribute to the Zn(2+) site. Catalysis depends on glutamate 197, which acts as the Proton donor. Aspartate 275 is a Zn(2+) binding site. A substrate-binding site is contributed by aspartate 276.

This sequence belongs to the metallo-dependent hydrolases superfamily. Adenosine and AMP deaminases family. Adenine deaminase type 2 subfamily. Requires Zn(2+) as cofactor.

The catalysed reaction is adenine + H2O + H(+) = hypoxanthine + NH4(+). Its function is as follows. Catalyzes the hydrolytic deamination of adenine to hypoxanthine. Plays an important role in the purine salvage pathway and in nitrogen catabolism. In Pseudomonas aeruginosa (strain UCBPP-PA14), this protein is Adenine deaminase.